The chain runs to 456 residues: Histidinol dehydrogenase homolog (456 aa).

A Zn(2+)-binding site is contributed by His279. Catalysis depends on proton acceptor residues Glu347 and His348. His440 is a binding site for Zn(2+).

This sequence belongs to the histidinol dehydrogenase family. Zn(2+) serves as cofactor.

The polypeptide is Histidinol dehydrogenase homolog (Rhizobium meliloti (strain 1021) (Ensifer meliloti)).